Here is a 158-residue protein sequence, read N- to C-terminus: Large ribosomal subunit protein bL21 (158 aa).

Residues 127–158 (TQETKSAASVKKAAKKSAPQKQAAVASNSKED) form a disordered region. Positions 131–158 (KSAASVKKAAKKSAPQKQAAVASNSKED) are enriched in low complexity.

This sequence belongs to the bacterial ribosomal protein bL21 family. Part of the 50S ribosomal subunit. Contacts protein L20.

Functionally, this protein binds to 23S rRNA in the presence of protein L20. This is Large ribosomal subunit protein bL21 from Bartonella henselae (strain ATCC 49882 / DSM 28221 / CCUG 30454 / Houston 1) (Rochalimaea henselae).